Reading from the N-terminus, the 177-residue chain is ATP synthase subunit delta (177 aa).

It belongs to the ATPase delta chain family. In terms of assembly, F-type ATPases have 2 components, F(1) - the catalytic core - and F(0) - the membrane proton channel. F(1) has five subunits: alpha(3), beta(3), gamma(1), delta(1), epsilon(1). F(0) has three main subunits: a(1), b(2) and c(10-14). The alpha and beta chains form an alternating ring which encloses part of the gamma chain. F(1) is attached to F(0) by a central stalk formed by the gamma and epsilon chains, while a peripheral stalk is formed by the delta and b chains.

It localises to the cell inner membrane. Its function is as follows. F(1)F(0) ATP synthase produces ATP from ADP in the presence of a proton or sodium gradient. F-type ATPases consist of two structural domains, F(1) containing the extramembraneous catalytic core and F(0) containing the membrane proton channel, linked together by a central stalk and a peripheral stalk. During catalysis, ATP synthesis in the catalytic domain of F(1) is coupled via a rotary mechanism of the central stalk subunits to proton translocation. Functionally, this protein is part of the stalk that links CF(0) to CF(1). It either transmits conformational changes from CF(0) to CF(1) or is implicated in proton conduction. The polypeptide is ATP synthase subunit delta (Haemophilus ducreyi (strain 35000HP / ATCC 700724)).